The following is a 124-amino-acid chain: Small ribosomal subunit protein uS12 (124 aa).

Residues 1–22 (MATVNQLVRKPRQKPDAKSNVA) form a disordered region. Asp89 is modified (3-methylthioaspartic acid).

This sequence belongs to the universal ribosomal protein uS12 family. In terms of assembly, part of the 30S ribosomal subunit. Contacts proteins S8 and S17. May interact with IF1 in the 30S initiation complex.

With S4 and S5 plays an important role in translational accuracy. In terms of biological role, interacts with and stabilizes bases of the 16S rRNA that are involved in tRNA selection in the A site and with the mRNA backbone. Located at the interface of the 30S and 50S subunits, it traverses the body of the 30S subunit contacting proteins on the other side and probably holding the rRNA structure together. The combined cluster of proteins S8, S12 and S17 appears to hold together the shoulder and platform of the 30S subunit. The polypeptide is Small ribosomal subunit protein uS12 (Pseudoalteromonas atlantica (strain T6c / ATCC BAA-1087)).